Here is a 159-residue protein sequence, read N- to C-terminus: Succinate dehydrogenase [ubiquinone] cytochrome b small subunit, mitochondrial (159 aa).

The N-terminal 56 residues, 1-56, are a transit peptide targeting the mitochondrion; the sequence is MAVLWRLSAVCGAQGGRALLLRTPVVRPAHISAFLQDRPIPEWCGVQHIHLSPGHH. Over 57-63 the chain is Mitochondrial matrix; sequence SGSKAAS. A helical transmembrane segment spans residues 64-85; the sequence is LHWTSERVVSVLLLGLLPAAYL. Residues 86–90 are Mitochondrial intermembrane-facing; the sequence is NPCSA. The helical transmembrane segment at 91–111 threads the bilayer; that stretch reads MDYSLAATLTLHGHWGLGQVV. Residue His102 participates in heme b binding. Residues 112–120 are Mitochondrial matrix-facing; sequence TDYVHGDAS. A ubiquinone is bound at residue Tyr114. Residues 121–142 form a helical membrane-spanning segment; sequence QKAAKAGLLALSALTFAGLCYF. At 143–159 the chain is on the mitochondrial intermembrane side; it reads NYHDVGICKAVAMLWKL.

Belongs to the CybS family. Component of complex II composed of four subunits: the flavoprotein (FP) SDHA, iron-sulfur protein (IP) SDHB, and a cytochrome b560 composed of SDHC and SDHD.

It is found in the mitochondrion inner membrane. Its pathway is carbohydrate metabolism; tricarboxylic acid cycle. Functionally, membrane-anchoring subunit of succinate dehydrogenase (SDH) that is involved in complex II of the mitochondrial electron transport chain and is responsible for transferring electrons from succinate to ubiquinone (coenzyme Q). SDH also oxidizes malate to the non-canonical enol form of oxaloacetate, enol-oxaloacetate. Enol-oxaloacetate, which is a potent inhibitor of the succinate dehydrogenase activity, is further isomerized into keto-oxaloacetate. This Pongo abelii (Sumatran orangutan) protein is Succinate dehydrogenase [ubiquinone] cytochrome b small subunit, mitochondrial (SDHD).